The following is a 1163-amino-acid chain: MFLMNAPPVVALQSRWEAFGQPRSFCLPDCFSEAKEDGSRASVSARVQMLISTLQRDEAALGMGHERLTQRGQRAERSRDTRLAPKPAVCKEQPEFPARGLVANCSALEKDEAGRRSPLELDSDSDDSVDRDIEEAIQEYLKARGGASEPMSQGAPSIPEPAHSSTLPIPCPSQLTPGSGSVPVGASEDQGSTSPASMSSEDSFEQSIRAEIEQFLNEKRQHENPKCDGFVDKKSDPNNSPARLRGNRETSARAALMGTCKEFIFRKPPRLTKMSTQQRNFQPKPTTEPETPVSTKLTAHRPEAAQSRGGVRRSMPARRSKRIRSSAPVHQASDSSSDDGIEEAIQLYQLEKTRKEASGDPPLRGQLKEESPGSAQPNALPEAHRRPPSKKKLAVPKVIDTTQGVLHPDPLSRLLTDSRASLPPGHAAAKSEAVCQASRLADTSTELMCAEAILDISKTILPAPMEGSDRPPSRNPLFCPQPMPPRSEGDSSNIDSDDSIEQEIRTFLALKAQVGSPQPAQGPLSSPGPSGQPGIPKVPFAKTLDLPLVCKRKRRGGGGSTTMPKKIREGRESTQDADHIQGKAQPGHDGWDPLGHNKITETPGGEAEAKEQPVISRTVGLSDTHLPQGALGKATEKESSEDKSSSLDSDEDLDMAIKDLLRSKRKFKKRCRDPRASCKKVRFGSTETRCGEKPSNLPGDWKDHRQQALRSCLPKCRGDNKDGPGRSPGSSVAEKAKMGGTGGEDATPAFLLRRKSPEGALPSTDTGASGHPPSASSPTSEDSAVDSDDSIELEIRRFLAEKAKESIRNTEPQGGPAKPEMPCRKDPTLGLQPGVCTRSQKARGTPQLAEGRRGPERARTQATGLLSQSGKGTLRAEQTARLTTALGRSEPALPKNTCRNSSAKASPPSRKSAHVHKDHSPQGSQTATAESVFGQLPSCAKVGAEAGSAGGTFHLNYGSQNLLTPNPGSQADLVLPWSDFAHQSRLSSPWVLNSGQGTVWTGVFRGEKEKGATSQAGAPPSLSSGPRKGLPFLSTQLFHFGKNVSWGGKQTSLFSPNLGLPLQAPAFSAFRETQPGHNPVFGSPHLLMKDSGNWPSRKAQGTLRQQDRRNSASEDKVLDLRYRHRVDREPQDQETLGSDASEFSDTSMEDGGSATVSSKGLKL.

Over residues 65-83 (HERLTQRGQRAERSRDTRL) the composition is skewed to basic and acidic residues. Disordered regions lie at residues 65–91 (HERL…AVCK), 144–253 (RGGA…TSAR), 266–393 (RKPP…KKKL), 463–496 (APME…NIDS), 514–653 (VGSP…DEDL), 672–929 (RDPR…TATA), and 1073–1163 (TQPG…GLKL). Polar residues-rich tracts occupy residues 163–179 (HSST…TPGS) and 189–201 (DQGS…MSSE). The segment covering 208 to 236 (IRAEIEQFLNEKRQHENPKCDGFVDKKSD) has biased composition (basic and acidic residues). Residues 273 to 297 (KMSTQQRNFQPKPTTEPETPVSTKL) are compositionally biased toward polar residues. The span at 315-324 (MPARRSKRIR) shows a compositional bias: basic residues. Low complexity predominate over residues 515 to 535 (GSPQPAQGPLSSPGPSGQPGI). Basic and acidic residues-rich tracts occupy residues 566–581 (KIRE…DHIQ) and 634–645 (ATEKESSEDKSS). Over residues 672 to 682 (RDPRASCKKVR) the composition is skewed to basic residues. The segment covering 766–780 (TGASGHPPSASSPTS) has biased composition (low complexity). The span at 783-792 (SAVDSDDSIE) shows a compositional bias: acidic residues. Basic and acidic residues-rich tracts occupy residues 793–808 (LEIR…ESIR) and 850–859 (EGRRGPERAR). Residues 860–871 (TQATGLLSQSGK) are compositionally biased toward polar residues. A compositionally biased stretch (low complexity) spans 901 to 910 (SSAKASPPSR). Basic and acidic residues predominate over residues 1105 to 1131 (QQDRRNSASEDKVLDLRYRHRVDREPQ). Serine 1111 bears the Phosphoserine mark. 2 stretches are compositionally biased toward polar residues: residues 1133–1146 (QETL…FSDT) and 1154–1163 (ATVSSKGLKL).

Interacts with UTP20 and PPP1CA.

The protein localises to the nucleus. It localises to the nucleolus. Functionally, inhibits phosphatase activity of protein phosphatase 1 (PP1) complexes. May positively regulate cell proliferation. The protein is Protein phosphatase 1 regulatory subunit 26 (Ppp1r26) of Mus musculus (Mouse).